Reading from the N-terminus, the 386-residue chain is 8-amino-7-oxononanoate synthase (386 aa).

Arginine 19 serves as a coordination point for substrate. Position 106–107 (106–107) interacts with pyridoxal 5'-phosphate; it reads GY. Histidine 131 contributes to the substrate binding site. Pyridoxal 5'-phosphate is bound by residues serine 177, histidine 205, and threonine 233. Lysine 236 carries the post-translational modification N6-(pyridoxal phosphate)lysine. Position 350 (threonine 350) interacts with substrate.

The protein belongs to the class-II pyridoxal-phosphate-dependent aminotransferase family. BioF subfamily. As to quaternary structure, homodimer. Pyridoxal 5'-phosphate serves as cofactor.

The enzyme catalyses 6-carboxyhexanoyl-[ACP] + L-alanine + H(+) = (8S)-8-amino-7-oxononanoate + holo-[ACP] + CO2. The protein operates within cofactor biosynthesis; biotin biosynthesis. Catalyzes the decarboxylative condensation of pimeloyl-[acyl-carrier protein] and L-alanine to produce 8-amino-7-oxononanoate (AON), [acyl-carrier protein], and carbon dioxide. This Alcanivorax borkumensis (strain ATCC 700651 / DSM 11573 / NCIMB 13689 / SK2) protein is 8-amino-7-oxononanoate synthase.